Consider the following 551-residue polypeptide: Ubiquitin domain-containing protein DSK2b (551 aa).

The Ubiquitin-like domain maps to 18-93 (VAVNIRCSNG…IHMVRGSAPS (76 aa)). The disordered stretch occupies residues 88–127 (RGSAPSSAPPPAPAASQTTAPSVTRGVGSDNSSNLGGASP). STI1 domains are found at residues 143–184 (GNAM…QNLM) and 197–236 (NPQM…MREM). Polar residues predominate over residues 294-319 (QGVTTQGSDASNNSSTPNAGTGTIPN). Residues 294–336 (QGVTTQGSDASNNSSTPNAGTGTIPNANPLPNPWGATGGQTTA) form a disordered region. STI1 domains follow at residues 373 to 410 (SPLG…MNQL) and 414 to 449 (NPQL…MQQM). The interval 455-475 (SLSQNRNTASQDAGQTGAATG) is disordered. Residues 465–475 (QDAGQTGAATG) show a composition bias toward low complexity. One can recognise a UBA domain in the interval 504–548 (PPEERYATQLQQLQEMGFYDRAENIRALLATNGNVNAAVERLLGS).

As to quaternary structure, interacts with 'Lys-48'-linked polyubiquitin chains via its UBA domain. Interacts with RPN10 via its ubiquitin-like domain. Interacts with PEX2 and PEX12. Ubiquitous.

The protein localises to the nucleus. The protein resides in the cytoplasm. Functionally, binds and presumably selects ubiquitin-conjugates for destruction. Prefers multiubiquitin chains rather than single ubiquitins, with a binding affinity for 'Lys-48'-linked ubiquitin chains. Acts as a ubiquitin receptor that associates with the 26S proteasomal docking subunit RPN10 for the indirect recognition of ubiquitinated substrates of ubiquitin/26S proteasome-mediated proteolysis (UPP). The chain is Ubiquitin domain-containing protein DSK2b (DSK2B) from Arabidopsis thaliana (Mouse-ear cress).